Reading from the N-terminus, the 410-residue chain is Neuroserpin (410 aa).

The N-terminal stretch at 1-16 (MTYLELLALLALQSVV) is a signal peptide. Residues Asn157, Asn321, and Asn401 are each glycosylated (N-linked (GlcNAc...) asparagine). Ser403 carries O-linked (Xyl...) (chondroitin sulfate) serine glycosylation.

It belongs to the serpin family. In terms of tissue distribution, detected in neurons in embryonic brain cortex (at protein level). During embryonic development mostly expressed in CNS. In adult expressed in brain and much less in spinal cord, heart, kidney and testis.

It is found in the secreted. The protein localises to the cytoplasmic vesicle. The protein resides in the secretory vesicle lumen. Its subcellular location is the perikaryon. Functionally, serine protease inhibitor that inhibits plasminogen activators and plasmin but not thrombin. May be involved in the formation or reorganization of synaptic connections as well as for synaptic plasticity in the adult nervous system. May protect neurons from cell damage by tissue-type plasminogen activator. This Mus musculus (Mouse) protein is Neuroserpin (Serpini1).